Reading from the N-terminus, the 603-residue chain is Phosphogluconate dehydratase (603 aa).

[4Fe-4S] cluster-binding residues include Cys-154 and Cys-221.

Belongs to the IlvD/Edd family. [4Fe-4S] cluster is required as a cofactor.

It catalyses the reaction 6-phospho-D-gluconate = 2-dehydro-3-deoxy-6-phospho-D-gluconate + H2O. Its pathway is carbohydrate metabolism; Entner-Doudoroff pathway. Its function is as follows. Catalyzes the dehydration of 6-phospho-D-gluconate to 2-dehydro-3-deoxy-6-phospho-D-gluconate. The protein is Phosphogluconate dehydratase of Escherichia coli O157:H7.